The primary structure comprises 258 residues: Homeobox-leucine zipper protein ATHB-7 (258 aa).

A DNA-binding region (homeobox) is located at residues 29-88 (NKNNQRRFSDEQIKSLEMMFESETRLEPRKKVQLARELGLQPRQVAIWFQNKRARWKSKQ). The interval 89–124 (LETEYNILRQNYDNLASQFESLKKEKQALVSELQRL) is leucine-zipper. The disordered stretch occupies residues 149–183 (SSTHHESENEENRRRKPEEVRPEMEMKDDKGHHGV). Residues 151–183 (THHESENEENRRRKPEEVRPEMEMKDDKGHHGV) show a composition bias toward basic and acidic residues.

It belongs to the HD-ZIP homeobox family. Class I subfamily. Interacts with TBP2 and TFIIB1. Widely expressed.

The protein resides in the nucleus. Probable transcription activator that may act as growth regulators in response to water deficit. The protein is Homeobox-leucine zipper protein ATHB-7 (ATHB-7) of Arabidopsis thaliana (Mouse-ear cress).